The primary structure comprises 458 residues: Transcription factor bHLH10 (458 aa).

Positions Met1–Asn49 are disordered. One can recognise a bHLH domain in the interval Ser243–Leu292. Positions Lys315–Lys338 are disordered. The segment covering Gly324–Thr334 has biased composition (acidic residues).

In terms of assembly, homodimer.

It is found in the nucleus. The polypeptide is Transcription factor bHLH10 (BHLH10) (Arabidopsis thaliana (Mouse-ear cress)).